Here is a 1398-residue protein sequence, read N- to C-terminus: DNA-directed RNA polymerase subunit beta' (1398 aa).

4 residues coordinate Zn(2+): C71, C73, C86, and C89. Residues D462, D464, and D466 each coordinate Mg(2+). C810, C884, C891, and C894 together coordinate Zn(2+).

It belongs to the RNA polymerase beta' chain family. As to quaternary structure, the RNAP catalytic core consists of 2 alpha, 1 beta, 1 beta' and 1 omega subunit. When a sigma factor is associated with the core the holoenzyme is formed, which can initiate transcription. Requires Mg(2+) as cofactor. Zn(2+) is required as a cofactor.

The catalysed reaction is RNA(n) + a ribonucleoside 5'-triphosphate = RNA(n+1) + diphosphate. In terms of biological role, DNA-dependent RNA polymerase catalyzes the transcription of DNA into RNA using the four ribonucleoside triphosphates as substrates. In Mesorhizobium japonicum (strain LMG 29417 / CECT 9101 / MAFF 303099) (Mesorhizobium loti (strain MAFF 303099)), this protein is DNA-directed RNA polymerase subunit beta'.